The following is an 87-amino-acid chain: Large ribosomal subunit protein bL31B-2/bL31B-3 (87 aa).

Belongs to the bacterial ribosomal protein bL31 family. Type B subfamily. In terms of assembly, part of the 50S ribosomal subunit.

The chain is Large ribosomal subunit protein bL31B-2/bL31B-3 (rpmE2-2) from Escherichia coli O157:H7.